The primary structure comprises 585 residues: Packaging protein UL32 (585 aa).

Residues 1–25 (MDRVESEEPMDGFESPVFSENTSSN) form a disordered region. 8 residues coordinate Zn(2+): Cys107, Cys110, His187, Cys193, Cys408, Cys411, His484, and Cys491. Zinc finger stretches follow at residues 107 to 193 (CLVC…LHVC) and 408 to 491 (CMLC…DLLC).

Belongs to the herpesviridae UL32 protein family.

The protein localises to the host cytoplasm. The protein resides in the host nucleus. Functionally, plays a role in efficient localization of neo-synthesized capsids to nuclear replication compartments, thereby controlling cleavage and packaging of virus genomic DNA. The polypeptide is Packaging protein UL32 (26) (Varicella-zoster virus (strain Dumas) (HHV-3)).